The following is a 148-amino-acid chain: Deoxyuridine 5'-triphosphate nucleotidohydrolase (148 aa).

Substrate-binding positions include 68 to 70 (RSG), N81, 85 to 87 (TID), and K95.

This sequence belongs to the dUTPase family. Requires Mg(2+) as cofactor.

The catalysed reaction is dUTP + H2O = dUMP + diphosphate + H(+). Its pathway is pyrimidine metabolism; dUMP biosynthesis; dUMP from dCTP (dUTP route): step 2/2. Its function is as follows. This enzyme is involved in nucleotide metabolism: it produces dUMP, the immediate precursor of thymidine nucleotides and it decreases the intracellular concentration of dUTP so that uracil cannot be incorporated into DNA. This chain is Deoxyuridine 5'-triphosphate nucleotidohydrolase, found in Rickettsia conorii (strain ATCC VR-613 / Malish 7).